The sequence spans 192 residues: Orotate phosphoribosyltransferase (192 aa).

116 to 124 (EDIVTTGLS) is a 5-phospho-alpha-D-ribose 1-diphosphate binding site. 2 residues coordinate orotate: Thr120 and Arg148.

It belongs to the purine/pyrimidine phosphoribosyltransferase family. PyrE subfamily. In terms of assembly, homodimer. The cofactor is Mg(2+).

It carries out the reaction orotidine 5'-phosphate + diphosphate = orotate + 5-phospho-alpha-D-ribose 1-diphosphate. The protein operates within pyrimidine metabolism; UMP biosynthesis via de novo pathway; UMP from orotate: step 1/2. Functionally, catalyzes the transfer of a ribosyl phosphate group from 5-phosphoribose 1-diphosphate to orotate, leading to the formation of orotidine monophosphate (OMP). The sequence is that of Orotate phosphoribosyltransferase from Bartonella henselae (strain ATCC 49882 / DSM 28221 / CCUG 30454 / Houston 1) (Rochalimaea henselae).